We begin with the raw amino-acid sequence, 617 residues long: Chitin elicitor receptor kinase 1 (617 aa).

Residues 1 to 23 (MKLKISLIAPILLLFSFFFAVES) form the signal peptide. Residues 24–232 (KCRTSCPLAL…KSSKQDGVGA (209 aa)) are Extracellular-facing. Disulfide bonds link cysteine 25-cysteine 93, cysteine 29-cysteine 155, and cysteine 91-cysteine 153. 3 N-linked (GlcNAc...) asparagine glycosylation sites follow: asparagine 40, asparagine 52, and asparagine 102. Residues 46-74 (VINQNLNSSIAPYDQINFDPILRYNSNIK) form the LysM 1; degenerate domain. The LysM 2; degenerate domain maps to 108-140 (RQEDTYERVAISNYANLTTMESLQARNPFPATN). 109-115 (QEDTYER) is a chitin binding site. N-linked (GlcNAc...) asparagine glycosylation occurs at asparagine 123. 137-143 (PATNIPL) provides a ligand contact to chitin. N-linked (GlcNAc...) asparagine glycosylation is present at asparagine 152. Residues 168–211 (VTYPLRPEDSLSSIARSSGVSADILQRYNPGVNFNSGNGIVYVP) enclose the LysM 3 domain. The chain crosses the membrane as a helical span at residues 233-253 (GVIAGIVIGVIVALLLILFIV). Topologically, residues 254-617 (YYAYRKNKSK…EDLVSLMSGR (364 aa)) are cytoplasmic. Residues serine 266, serine 268, and serine 274 each carry the phosphoserine modification. Positions 322–594 (FNLSFKIGQG…YIVVALSTLF (273 aa)) constitute a Protein kinase domain. ATP contacts are provided by residues 328–336 (IGQGGFGAV) and lysine 349. Residue tyrosine 390 is modified to Phosphotyrosine. Catalysis depends on aspartate 441, which acts as the Proton acceptor. Residues threonine 479 and threonine 519 each carry the phosphothreonine modification.

The protein belongs to the protein kinase superfamily. Ser/Thr protein kinase family. As to quaternary structure, forms homodimers and homooligomers. Homodimerization is required to trigger plant defenses. Binds to chitin, chitosan and chito-oligomer oligosaccharide elicitors. Interaction with chitin octamer (NAG(8)) promotes homodimerization while shorter chitin oligomers inhibit homodimerization. Interacts with Pseudomonas syringae hopAB2/avrPtoB. Interacts (preferentially when unphosphorylated) with PBL27 at the plasma membrane. Binds to IOS1. Autophosphorylated. Autophosphorylation is induced by chitin and derivatives. Post-translationally, ubiquitinated and targeted to the proteasome by hopAB2/avrPtoB of Pseudomonas syringae pv. tomato DC3000. In terms of tissue distribution, expressed ubiquitously, with lowest expression in pollen.

It localises to the cell membrane. The catalysed reaction is L-seryl-[protein] + ATP = O-phospho-L-seryl-[protein] + ADP + H(+). It carries out the reaction L-threonyl-[protein] + ATP = O-phospho-L-threonyl-[protein] + ADP + H(+). With respect to regulation, activated by chitin-mediated homodimerization. In terms of biological role, lysin motif (LysM) receptor kinase that functions as a cell surface receptor in chitin elicitor (chitooligosaccharides) signaling leading to innate immunity toward both biotic and abiotic stresses (e.g. tolerance to salinity, heavy-metal stresses, and Botrytis cinerea infection). Recognizes microbe-derived N-acetylglucosamine (NAG)-containing ligands. Involved in the resistance to pathogenic fungi Alternaria brassicicola and Erysiphe cichoracearum, probably by sensing microbe-associated molecular patterns (MAMP) and pathogen-associated molecular patterns (PAMP). Plays an essential role in detecting peptidoglycans (e.g. PGNs) and restricting bacterial growth. Target of the bacterial type III effector E3-ligase protein hopAB2/avrPtoB of Pseudomonas syringae pv. tomato DC3000 that mediates ubiquitination and subsequent proteolysis, thus blocking all defense responses by suppressing PAMP-triggered immunity (PTI). Mediates chitin-induced phosphorylation of PBL27. The chain is Chitin elicitor receptor kinase 1 (CERK1) from Arabidopsis thaliana (Mouse-ear cress).